The following is a 1034-amino-acid chain: Presequence protease, mitochondrial (1034 aa).

A mitochondrion-targeting transit peptide spans 1–29 (MLKGGMLSRWKMWSPQYKILRNHLINFKS). His128 contributes to the Zn(2+) binding site. Catalysis depends on Glu131, which acts as the Proton acceptor. Residues His132 and Glu229 each contribute to the Zn(2+) site.

The protein belongs to the peptidase M16 family. PreP subfamily. Homodimer. Requires Zn(2+) as cofactor.

The protein localises to the mitochondrion. ATP-independent protease that degrades mitochondrial transit peptides after their cleavage. Also degrades other unstructured peptides. The chain is Presequence protease, mitochondrial from Drosophila melanogaster (Fruit fly).